A 76-amino-acid polypeptide reads, in one-letter code: UPF0248 protein MMP0286 (76 aa).

The protein belongs to the UPF0248 family.

This chain is UPF0248 protein MMP0286, found in Methanococcus maripaludis (strain DSM 14266 / JCM 13030 / NBRC 101832 / S2 / LL).